The chain runs to 304 residues: Porphobilinogen deaminase (304 aa).

S-(dipyrrolylmethanemethyl)cysteine is present on C239.

The protein belongs to the HMBS family. As to quaternary structure, monomer. Dipyrromethane serves as cofactor.

It catalyses the reaction 4 porphobilinogen + H2O = hydroxymethylbilane + 4 NH4(+). It functions in the pathway porphyrin-containing compound metabolism; protoporphyrin-IX biosynthesis; coproporphyrinogen-III from 5-aminolevulinate: step 2/4. Functionally, tetrapolymerization of the monopyrrole PBG into the hydroxymethylbilane pre-uroporphyrinogen in several discrete steps. The sequence is that of Porphobilinogen deaminase from Brucella ovis (strain ATCC 25840 / 63/290 / NCTC 10512).